The following is a 127-amino-acid chain: Large-conductance mechanosensitive channel (127 aa).

The next 3 membrane-spanning stretches (helical) occupy residues 8–28, 30–50, and 70–90; these read FAFK…AAFG, IVTA…LSLI, and IGVL…LFLF.

It belongs to the MscL family. Homopentamer.

Its subcellular location is the cell membrane. Functionally, channel that opens in response to stretch forces in the membrane lipid bilayer. May participate in the regulation of osmotic pressure changes within the cell. In Herpetosiphon aurantiacus (strain ATCC 23779 / DSM 785 / 114-95), this protein is Large-conductance mechanosensitive channel.